The chain runs to 508 residues: Photosystem II CP47 reaction center protein (508 aa).

6 helical membrane-spanning segments follow: residues 21 to 36 (AVHLMHTALVSGWAGS), 101 to 115 (IVLSGLLFLAAIWHW), 140 to 156 (GIHLFLSGVLCFGFGAF), 203 to 218 (IAAGILGILAGLFHLS), 237 to 252 (VLSSSIAAVFFAAFVV), and 457 to 472 (TFALLFFFGHIWHGAR).

It belongs to the PsbB/PsbC family. PsbB subfamily. PSII is composed of 1 copy each of membrane proteins PsbA, PsbB, PsbC, PsbD, PsbE, PsbF, PsbH, PsbI, PsbJ, PsbK, PsbL, PsbM, PsbT, PsbX, PsbY, PsbZ, Psb30/Ycf12, at least 3 peripheral proteins of the oxygen-evolving complex and a large number of cofactors. It forms dimeric complexes. Binds multiple chlorophylls. PSII binds additional chlorophylls, carotenoids and specific lipids. serves as cofactor.

It is found in the plastid. The protein resides in the chloroplast thylakoid membrane. In terms of biological role, one of the components of the core complex of photosystem II (PSII). It binds chlorophyll and helps catalyze the primary light-induced photochemical processes of PSII. PSII is a light-driven water:plastoquinone oxidoreductase, using light energy to abstract electrons from H(2)O, generating O(2) and a proton gradient subsequently used for ATP formation. In Anthoceros angustus (Hornwort), this protein is Photosystem II CP47 reaction center protein.